The chain runs to 60 residues: MKGTPSFGKRNKNLHIRCRRCGKNSYHVRKKVCAACGFGRSRRIRRYSWQNKKITGQRLK.

Zn(2+) contacts are provided by Cys18, Cys21, Cys33, and Cys36. Residues 18 to 36 form a C4-type zinc finger; it reads CRRCGKNSYHVRKKVCAAC.

This sequence belongs to the eukaryotic ribosomal protein eL37 family. The cofactor is Zn(2+).

In terms of biological role, binds to the 23S rRNA. This chain is Large ribosomal subunit protein eL37 (rpl37e), found in Methanothermobacter thermautotrophicus (strain ATCC 29096 / DSM 1053 / JCM 10044 / NBRC 100330 / Delta H) (Methanobacterium thermoautotrophicum).